Reading from the N-terminus, the 566-residue chain is Autophagy-related protein 22-1 (566 aa).

Residues 38-58 (YPIAAEVFAVVAVGAFLPVIL) form a helical membrane-spanning segment. N103 carries an N-linked (GlcNAc...) asparagine glycan. 3 consecutive transmembrane segments (helical) span residues 110–130 (SFAM…LVCF), 146–168 (AFAY…VYFL), and 179–199 (SLGC…ANHA). An N-linked (GlcNAc...) asparagine glycan is attached at N200. Transmembrane regions (helical) follow at residues 242–262 (GYGY…LWLF), 278–298 (VILL…LLWL), 351–371 (FLIS…TAVL), 382–402 (IAIA…AFAW), 416–436 (ILLC…LGFI), 451–471 (WEIY…SSYA), 488–510 (FALY…GWLV), and 519–539 (AFIF…MLDV). Positions 547-566 (KAMADGEGRGRGTYERVREE) are disordered.

The protein belongs to the ATG22 family.

The protein resides in the vacuole membrane. Vacuolar effluxer which mediate the efflux of amino acids resulting from autophagic degradation. The release of autophagic amino acids allows the maintenance of protein synthesis and viability during nitrogen starvation. The protein is Autophagy-related protein 22-1 (ATG22-1) of Phaeosphaeria nodorum (strain SN15 / ATCC MYA-4574 / FGSC 10173) (Glume blotch fungus).